The chain runs to 426 residues: Glutamate-1-semialdehyde 2,1-aminomutase (426 aa).

K265 carries the post-translational modification N6-(pyridoxal phosphate)lysine.

Belongs to the class-III pyridoxal-phosphate-dependent aminotransferase family. HemL subfamily. In terms of assembly, homodimer. The cofactor is pyridoxal 5'-phosphate.

The protein resides in the cytoplasm. The enzyme catalyses (S)-4-amino-5-oxopentanoate = 5-aminolevulinate. It participates in porphyrin-containing compound metabolism; protoporphyrin-IX biosynthesis; 5-aminolevulinate from L-glutamyl-tRNA(Glu): step 2/2. This is Glutamate-1-semialdehyde 2,1-aminomutase from Marinobacter nauticus (strain ATCC 700491 / DSM 11845 / VT8) (Marinobacter aquaeolei).